Here is a 612-residue protein sequence, read N- to C-terminus: Elongation factor 4 (612 aa).

The 183-residue stretch at 12–194 folds into the tr-type G domain; the sequence is SRIRNFSIIA…QIVEKVPAPS (183 aa). GTP-binding positions include 24–29 and 141–144; these read DHGKST and NKID.

The protein belongs to the TRAFAC class translation factor GTPase superfamily. Classic translation factor GTPase family. LepA subfamily.

It is found in the cell membrane. The enzyme catalyses GTP + H2O = GDP + phosphate + H(+). In terms of biological role, required for accurate and efficient protein synthesis under certain stress conditions. May act as a fidelity factor of the translation reaction, by catalyzing a one-codon backward translocation of tRNAs on improperly translocated ribosomes. Back-translocation proceeds from a post-translocation (POST) complex to a pre-translocation (PRE) complex, thus giving elongation factor G a second chance to translocate the tRNAs correctly. Binds to ribosomes in a GTP-dependent manner. The protein is Elongation factor 4 of Bacillus licheniformis (strain ATCC 14580 / DSM 13 / JCM 2505 / CCUG 7422 / NBRC 12200 / NCIMB 9375 / NCTC 10341 / NRRL NRS-1264 / Gibson 46).